The primary structure comprises 833 residues: Glycerol-3-phosphate acyltransferase (833 aa).

An HXXXXD motif motif is present at residues 309-314 (CHRSHI).

The protein belongs to the GPAT/DAPAT family.

The protein resides in the cell inner membrane. The enzyme catalyses sn-glycerol 3-phosphate + an acyl-CoA = a 1-acyl-sn-glycero-3-phosphate + CoA. It participates in phospholipid metabolism; CDP-diacylglycerol biosynthesis; CDP-diacylglycerol from sn-glycerol 3-phosphate: step 1/3. The sequence is that of Glycerol-3-phosphate acyltransferase from Pseudomonas savastanoi pv. phaseolicola (strain 1448A / Race 6) (Pseudomonas syringae pv. phaseolicola (strain 1448A / Race 6)).